Here is a 1042-residue protein sequence, read N- to C-terminus: Starch synthase 3, chloroplastic/amyloplastic (1042 aa).

The transit peptide at 1-44 (MISYFLNQDFSRKKQGRMAASGPKSSGPRGFGRRTTVGSAQKRT) directs the protein to the chloroplast. Residues 1 to 63 (MISYFLNQDF…NATSTATNEV (63 aa)) are disordered. The segment covering 54–63 (NATSTATNEV) has biased composition (polar residues). Positions 247–302 (ENFLLEEKLREQEKLAKEEAERERQKEEKRRIEAQKAAIEADRAQAKAETQKRREL) form a coiled coil. K608 is a binding site for ADP-alpha-D-glucose.

The protein belongs to the glycosyltransferase 1 family. Bacterial/plant glycogen synthase subfamily. Expressed in leaves and flowers.

The protein resides in the plastid. Its subcellular location is the chloroplast. It localises to the amyloplast. It carries out the reaction [(1-&gt;4)-alpha-D-glucosyl](n) + ADP-alpha-D-glucose = [(1-&gt;4)-alpha-D-glucosyl](n+1) + ADP + H(+). The protein operates within glycan biosynthesis; starch biosynthesis. Its function is as follows. Involved in the synthesis of glycan chains within amylopectin in leaves. May play a regulatory role in the control of starch accumulation in plastids. This is Starch synthase 3, chloroplastic/amyloplastic (SS3) from Arabidopsis thaliana (Mouse-ear cress).